Reading from the N-terminus, the 253-residue chain is Methionine-R-sulfoxide reductase B3, mitochondrial (253 aa).

The signal sequence occupies residues 1-56 (MPPAAPSVARSREGGGIGQRRLVFPKSARRTLPCPIALCLGLCLAAAAATTTRASA). Residue lysine 102 is modified to N6-acetyllysine. Positions 107-229 (QQELRKRLTP…NSASLSFTPA (123 aa)) constitute a MsrB domain. Residues cysteine 146, cysteine 149, cysteine 195, and cysteine 198 each contribute to the Zn(2+) site. Residue cysteine 218 is the Nucleophile of the active site. The tract at residues 227 to 253 (TPADSSEAEGSGIKESGSPAAADRAEL) is disordered. Position 244 is a phosphoserine (serine 244). Residues 250 to 253 (RAEL) carry the Endoplasmic reticulum retention signal motif.

The protein belongs to the MsrB Met sulfoxide reductase family. Monomer. Requires Zn(2+) as cofactor. In terms of tissue distribution, widely expressed. Detected in the sensory epithelia of the organ of Corti and vestibular end organs as early as P2 up to adulthood (at protein level). In the organ of Corti, present in inner and outer hair cells and, to a lesser extent, in supporting cells (at protein level). In hair cells, distributed throughout the cell body. Barely detectable level in stereocilia. Also observed in spiral ganglion neurons, but not in the stria vascularis. In the vestibular end organs, found throughout the sensory epithelium, but more intense expression in hair cells than in supporting cells (at protein level). In vestibular hair cells, present within cell bodies and to a lesser extent in kinocilia. Barely detectable in stereocilia.

The protein resides in the endoplasmic reticulum. It carries out the reaction L-methionyl-[protein] + [thioredoxin]-disulfide + H2O = L-methionyl-(R)-S-oxide-[protein] + [thioredoxin]-dithiol. The enzyme catalyses [thioredoxin]-disulfide + L-methionine + H2O = L-methionine (R)-S-oxide + [thioredoxin]-dithiol. Its function is as follows. Catalyzes the reduction of free and protein-bound methionine sulfoxide to methionine. The polypeptide is Methionine-R-sulfoxide reductase B3, mitochondrial (Msrb3) (Mus musculus (Mouse)).